Consider the following 424-residue polypeptide: Vasopressin V1a receptor (424 aa).

Positions 1–40 (MSFPRGSQDRSVGNSSPWWPLTTEGSNGSQEAARLGEGDS) are disordered. Over 1–52 (MSFPRGSQDRSVGNSSPWWPLTTEGSNGSQEAARLGEGDSPLGDVRNEELAK) the chain is Extracellular. The span at 9–30 (DRSVGNSSPWWPLTTEGSNGSQ) shows a compositional bias: polar residues. A glycan (N-linked (GlcNAc...) asparagine) is linked at asparagine 27. A helical membrane pass occupies residues 53–76 (LEIAVLAVIFVVAVLGNSSVLLAL). Topologically, residues 77–88 (HRTPRKTSRMHL) are cytoplasmic. Residues 89–110 (FIRHLSLADLAVAFFQVLPQLC) traverse the membrane as a helical segment. Residues 111–125 (WDITYRFRGPDWLCR) lie on the Extracellular side of the membrane. The cysteines at positions 124 and 205 are disulfide-linked. The helical transmembrane segment at 126–147 (VVKHLQVFAMFASAYMLVVMTA) threads the bilayer. Over 148–168 (DRYIAVCHPLKTLQQPARRSR) the chain is Cytoplasmic. The chain crosses the membrane as a helical span at residues 169 to 190 (LMIATSWVLSFILSTPQYFIFS). At 191 to 220 (VIEIEVNNGTKTQDCWATFIQPWGTRAYVT) the chain is on the extracellular side. The chain crosses the membrane as a helical span at residues 221–241 (WMTSGVFVAPVVVLGTCYGFI). The Cytoplasmic segment spans residues 242 to 299 (CYHIWRNIRGKTASSRHSKGDKGSGEAVGPFHKGLLVTPCVSSVKSISRAKIRTVKMT). Residues 300-319 (FVIVSAYILCWAPFFIVQMW) traverse the membrane as a helical segment. Residues 320-337 (SVWDENFIWTDSENPSIT) are Extracellular-facing. A helical membrane pass occupies residues 338–357 (ITALLASLNSCCNPWIYMFF). Residues 358 to 424 (SGHLLQDCVQ…KSIRFIPVST (67 aa)) are Cytoplasmic-facing. 2 S-palmitoyl cysteine lipidation sites follow: cysteine 371 and cysteine 372. Positions 383 to 416 (DSDSMSRRQTSYSNNRSPTNSTGMWKDSPKSSKS) are disordered. Over residues 389–405 (RRQTSYSNNRSPTNSTG) the composition is skewed to polar residues. The residue at position 410 (serine 410) is a Phosphoserine.

This sequence belongs to the G-protein coupled receptor 1 family. Vasopressin/oxytocin receptor subfamily. In terms of processing, palmitoylated on three cysteine residues, of which only two are identified. In terms of tissue distribution, localized within gonadotropes of the anterior pituitary of the brain. Broadly distributed throughout the cerebral cortex.

The protein localises to the cell membrane. Its subcellular location is the cytoplasmic vesicle membrane. Receptor for arginine vasopressin. The activity of this receptor is mediated by G proteins which activate a phosphatidyl-inositol-calcium second messenger system. Involved in social memory formation. The polypeptide is Vasopressin V1a receptor (Avpr1a) (Rattus norvegicus (Rat)).